Consider the following 504-residue polypeptide: L-amino-acid oxidase (504 aa).

The first 18 residues, 1 to 18, serve as a signal peptide directing secretion; it reads MNVFFMFSLLFLATLGSC. C28 and C191 form a disulfide bridge. FAD-binding positions include 61–62, 81–82, R89, and 105–108; these read MS, EA, and GPMR. Residue R108 coordinates substrate. An N-linked (GlcNAc...) asparagine glycan is attached at N190. H241 provides a ligand contact to substrate. FAD is bound at residue V279. The cysteines at positions 349 and 430 are disulfide-linked. N379 carries N-linked (GlcNAc...) asparagine glycosylation. Substrate is bound at residue Y390. FAD is bound by residues E475 and 482-487; that span reads GWIDST. 482 to 483 contacts substrate; the sequence is GW.

Belongs to the flavin monoamine oxidase family. FIG1 subfamily. Homodimer; non-covalently linked. Requires FAD as cofactor. Expressed by the venom gland.

Its subcellular location is the secreted. The enzyme catalyses an L-alpha-amino acid + O2 + H2O = a 2-oxocarboxylate + H2O2 + NH4(+). It catalyses the reaction L-leucine + O2 + H2O = 4-methyl-2-oxopentanoate + H2O2 + NH4(+). It carries out the reaction L-phenylalanine + O2 + H2O = 3-phenylpyruvate + H2O2 + NH4(+). The catalysed reaction is L-tryptophan + O2 + H2O = indole-3-pyruvate + H2O2 + NH4(+). The enzyme catalyses L-methionine + O2 + H2O = 4-methylsulfanyl-2-oxobutanoate + H2O2 + NH4(+). It catalyses the reaction L-tyrosine + O2 + H2O = 3-(4-hydroxyphenyl)pyruvate + H2O2 + NH4(+). Its function is as follows. Catalyzes an oxidative deamination of predominantly hydrophobic and aromatic L-amino acids, thus producing hydrogen peroxide that may contribute to the diverse toxic effects of this enzyme. Is highly active on L-Tyr followed by L-Phe, L-Met, L-Leu, L-Trp, and weakly active on L-Ile, L-Arg, L-Val, L-Lys, and L-Ala. Inhibits ADP- and collagen-induced platelet aggregation. This inhibition is inhibited by catalase, indicating the importance of generated H(2)O(2) for the inhibitory effect. This effect on platelets among snake L-amino-acid oxidases is however controversial, since some of them induce aggregation, whereas the other inhibit agonist-induced aggregation. In vivo, this enzyme induces a rapid, substantial and reversible increase in the paw volume of mice (edema). In addition, myofibrosis, and inflammatory cell infiltration on the paw tissue are also observed. This chain is L-amino-acid oxidase, found in Daboia russelii (Russel's viper).